Consider the following 373-residue polypeptide: Probable tRNA sulfurtransferase (373 aa).

Residues 54 to 158 (NKNIEELSKV…NDVAYFYYKI (105 aa)) enclose the THUMP domain. ATP is bound by residues 176–177 (LF), 201–202 (NF), lysine 256, glycine 278, and glutamine 287.

Belongs to the ThiI family.

It localises to the cytoplasm. The catalysed reaction is [ThiI sulfur-carrier protein]-S-sulfanyl-L-cysteine + a uridine in tRNA + 2 reduced [2Fe-2S]-[ferredoxin] + ATP + H(+) = [ThiI sulfur-carrier protein]-L-cysteine + a 4-thiouridine in tRNA + 2 oxidized [2Fe-2S]-[ferredoxin] + AMP + diphosphate. It catalyses the reaction [ThiS sulfur-carrier protein]-C-terminal Gly-Gly-AMP + S-sulfanyl-L-cysteinyl-[cysteine desulfurase] + AH2 = [ThiS sulfur-carrier protein]-C-terminal-Gly-aminoethanethioate + L-cysteinyl-[cysteine desulfurase] + A + AMP + 2 H(+). Its pathway is cofactor biosynthesis; thiamine diphosphate biosynthesis. In terms of biological role, catalyzes the ATP-dependent transfer of a sulfur to tRNA to produce 4-thiouridine in position 8 of tRNAs, which functions as a near-UV photosensor. Also catalyzes the transfer of sulfur to the sulfur carrier protein ThiS, forming ThiS-thiocarboxylate. This is a step in the synthesis of thiazole, in the thiamine biosynthesis pathway. The sulfur is donated as persulfide by IscS. The polypeptide is Probable tRNA sulfurtransferase (Saccharolobus islandicus (strain Y.N.15.51 / Yellowstone #2) (Sulfolobus islandicus)).